Consider the following 275-residue polypeptide: F420-dependent methylenetetrahydromethanopterin dehydrogenase (275 aa).

The protein belongs to the MTD family.

The catalysed reaction is 5,10-methylenetetrahydromethanopterin + oxidized coenzyme F420-(gamma-L-Glu)(n) + 2 H(+) = 5,10-methenyl-5,6,7,8-tetrahydromethanopterin + reduced coenzyme F420-(gamma-L-Glu)(n). It participates in one-carbon metabolism; methanogenesis from CO(2); 5,10-methylene-5,6,7,8-tetrahydromethanopterin from 5,10-methenyl-5,6,7,8-tetrahydromethanopterin (coenzyme F420 route): step 1/1. Functionally, catalyzes the reversible reduction of methenyl-H(4)MPT(+) to methylene-H(4)MPT. This Methanobrevibacter smithii (strain ATCC 35061 / DSM 861 / OCM 144 / PS) protein is F420-dependent methylenetetrahydromethanopterin dehydrogenase.